We begin with the raw amino-acid sequence, 460 residues long: Cysteine--tRNA ligase (460 aa).

Cysteine 29 is a Zn(2+) binding site. The 'HIGH' region signature appears at 31–41 (MTVYDYMHIGH). 3 residues coordinate Zn(2+): cysteine 210, histidine 235, and glutamate 239. A 'KMSKS' region motif is present at residues 267–271 (KMSKS). Lysine 270 serves as a coordination point for ATP.

The protein belongs to the class-I aminoacyl-tRNA synthetase family. As to quaternary structure, monomer. Requires Zn(2+) as cofactor.

Its subcellular location is the cytoplasm. The catalysed reaction is tRNA(Cys) + L-cysteine + ATP = L-cysteinyl-tRNA(Cys) + AMP + diphosphate. This Coxiella burnetii (strain RSA 493 / Nine Mile phase I) protein is Cysteine--tRNA ligase.